The primary structure comprises 212 residues: HTH-type transcriptional regulatory protein RaaS (212 aa).

Residues 6–65 (LTAHARIREAAIEQFGRHGFGVGLRAIAEAAGVSAALVIHHFGSKEGLRKACDDFVAEEI) form the HTH tetR-type domain. Positions 28 to 47 (GLRAIAEAAGVSAALVIHHF) form a DNA-binding region, H-T-H motif.

In terms of assembly, homodimer. Interacts with long chain acyl-CoA derivatives. Interacts with several drugs such rhodamine 6G, ethidium and safranin O.

With respect to regulation, interaction with long chain acyl-CoA derivatives (oleoyl-CoA and, to lesser extent, stearoyl-CoA) prevents binding to DNA, leading to the expression of the target genes. Long chain acyl-CoA derivatives may serve as biological indicators of the bacterial metabolic state. Its function is as follows. Regulates the expression of the Rv1217c-Rv1218c multidrug efflux system and its own expression. Acts by binding to promoter regions of Rv1219c and upstream of the Rv1218c gene. Important for survival in prolonged stationary phase and during macrophage infection. May be used to eliminate non-growing mycobacteria. This chain is HTH-type transcriptional regulatory protein RaaS, found in Mycobacterium tuberculosis (strain ATCC 25618 / H37Rv).